The sequence spans 134 residues: uncharacterized protein (134 aa).

3 helical membrane passes run 26–46 (VAVFLVRAVILLIFAAFGNIG), 55–75 (LLKFSIINIIMLLFGIAQIIV), and 101–121 (YAPMILLLAVNLCGAVFGLIL).

It localises to the membrane. This is an uncharacterized protein from Dictyostelium discoideum (Social amoeba).